We begin with the raw amino-acid sequence, 605 residues long: Pyruvate decarboxylase 1 (605 aa).

The substrate site is built by Asp-67 and His-154. The thiamine pyrophosphate binding stretch occupies residues 432–514 (DSWFNCQKLR…FLINNGGYTI (83 aa)). Mg(2+) is bound by residues Asp-482, Asn-509, and Gly-511. Residue Glu-515 coordinates substrate.

Belongs to the TPP enzyme family. As to quaternary structure, homotetramer. A metal cation is required as a cofactor. The cofactor is thiamine diphosphate.

The catalysed reaction is a 2-oxocarboxylate + H(+) = an aldehyde + CO2. This is Pyruvate decarboxylase 1 (PDC1) from Oryza sativa subsp. japonica (Rice).